A 135-amino-acid polypeptide reads, in one-letter code: UPF0355 protein SAV0387 (135 aa).

It belongs to the UPF0355 family.

The polypeptide is UPF0355 protein SAV0387 (Staphylococcus aureus (strain Mu50 / ATCC 700699)).